A 754-amino-acid polypeptide reads, in one-letter code: Lysyl oxidase homolog 3 (754 aa).

A signal peptide spans 1–26; that stretch reads MRAVSVWYCCPWGLLLLHCLCSFSVG. SRCR domains are found at residues 45–146, 170–283, 308–408, and 418–526; these read FRLA…VICK, VRLR…VSCV, VRLK…VRCN, and IRLS…VICS. Cystine bridges form between Cys71/Cys135, Cys84/Cys145, Cys115/Cys125, Cys202/Cys272, Cys215/Cys282, Cys249/Cys259, Cys333/Cys397, Cys346/Cys407, Cys377/Cys387, Cys447/Cys512, Cys460/Cys525, Cys493/Cys503, Cys555/Cys561, Cys607/Cys655, Cys639/Cys645, Cys667/Cys677, and Cys714/Cys728. The N-linked (GlcNAc...) asparagine glycan is linked to Asn112. Asn267 is a glycosylation site (N-linked (GlcNAc...) asparagine). 2 N-linked (GlcNAc...) asparagine glycosylation sites follow: Asn391 and Asn482. The tract at residues 530 to 733 is lysyl-oxidase like; sequence SDLLLHSALV…WVHNCHIGDA (204 aa). Residues His608, His610, and His612 each coordinate Cu cation. N-linked (GlcNAc...) asparagine glycosylation is present at Asn626. A cross-link (lysine tyrosylquinone (Lys-Tyr)) is located at residues 635 to 671; sequence KASFCLEDTECQEDVSKRYECANFGEQGITVGCWDLY. Tyr671 is subject to 2',4',5'-topaquinone.

It belongs to the lysyl oxidase family. Cu cation is required as a cofactor. Lysine tyrosylquinone residue serves as cofactor. The lysine tyrosylquinone cross-link (LTQ) is generated by condensation of the epsilon-amino group of a lysine with a topaquinone produced by oxidation of tyrosine. As to expression, expressed in palate: predominantly present in the palate mesenchyme and tongue (at protein level). In spine, expressed in the original intervertebral disk, cartilage primordia, anterior and posterior longitudinal ligaments, meninges of spinal cord, lung and heart. In eyes, strongly expressed in the skin of the eyelid and weakly expressed in the cornea and sclera. In lung, predominantly expressed in the pulmonary mesenchyme. In developing muscle, expressed at myofiber ends (at protein level).

The protein resides in the secreted. It localises to the extracellular space. It is found in the cytoplasm. Its subcellular location is the nucleus. The catalysed reaction is L-lysyl-[protein] + O2 + H2O = (S)-2-amino-6-oxohexanoyl-[protein] + H2O2 + NH4(+). It carries out the reaction N(6)-acetyl-L-lysyl-[protein] + O2 + H2O = acetamide + (S)-2-amino-6-oxohexanoyl-[protein] + H2O2. Protein-lysine 6-oxidase that mediates the oxidation of peptidyl lysine residues to allysine in target proteins. Catalyzes the post-translational oxidative deamination of peptidyl lysine residues in precursors of elastin and different types of collagens, a prerequisite in the formation of cross-links between collagens and elastin. Required for somite boundary formation by catalyzing oxidation of fibronectin (FN1), enhancing integrin signaling in myofibers and their adhesion to the myotendinous junction (MTJ). Acts as a regulator of inflammatory response by inhibiting differentiation of naive CD4(+) T-cells into T-helper Th17 or regulatory T-cells (Treg): acts by interacting with STAT3 in the nucleus and catalyzing both deacetylation and oxidation of lysine residues on STAT3, leading to disrupt STAT3 dimerization and inhibit STAT3 transcription activity. Oxidation of lysine residues to allysine on STAT3 preferentially takes place on lysine residues that are acetylated. Also able to catalyze deacetylation of lysine residues on STAT3. The polypeptide is Lysyl oxidase homolog 3 (Mus musculus (Mouse)).